A 397-amino-acid chain; its full sequence is Serpin B10 (397 aa).

Residues 74 to 77 (KKRK) carry the Nuclear localization signal motif.

The protein belongs to the serpin family. Ov-serpin subfamily.

It localises to the nucleus. Its subcellular location is the cytoplasm. In terms of biological role, protease inhibitor that may play a role in the regulation of protease activities during hematopoiesis and apoptosis induced by TNF. May regulate protease activities in the cytoplasm and in the nucleus. In Plecturocebus moloch (Dusky titi monkey), this protein is Serpin B10 (SERPINB10).